Here is a 693-residue protein sequence, read N- to C-terminus: Polyribonucleotide nucleotidyltransferase (693 aa).

Residues Asp-487 and Asp-493 each contribute to the Mg(2+) site. One can recognise a KH domain in the interval 554–613 (PRIYTIKINPEKIKDVIGKGGSIIRMLTEETGTVIEIKDDGIVKISAINGEKAKYAIKRI). In terms of domain architecture, S1 motif spans 623–691 (GKIYSGKVTR…RQGRIRLSMK (69 aa)).

Belongs to the polyribonucleotide nucleotidyltransferase family. Component of the RNA degradosome, which is a multiprotein complex involved in RNA processing and mRNA degradation. Requires Mg(2+) as cofactor.

The protein resides in the cytoplasm. It catalyses the reaction RNA(n+1) + phosphate = RNA(n) + a ribonucleoside 5'-diphosphate. In terms of biological role, involved in mRNA degradation. Catalyzes the phosphorolysis of single-stranded polyribonucleotides processively in the 3'- to 5'-direction. This chain is Polyribonucleotide nucleotidyltransferase, found in Buchnera aphidicola subsp. Cinara cedri (strain Cc).